Here is a 671-residue protein sequence, read N- to C-terminus: DNA ligase (671 aa).

NAD(+) contacts are provided by residues 32–36 (DAEYD), 81–82 (SL), and Glu113. Lys115 (N6-AMP-lysine intermediate) is an active-site residue. NAD(+) is bound by residues Arg136, Glu173, Lys290, and Lys314. Zn(2+) is bound by residues Cys408, Cys411, Cys426, and Cys432. One can recognise a BRCT domain in the interval 593 to 671 (EIDSPFAGKT…EAEMIRLLGA (79 aa)).

It belongs to the NAD-dependent DNA ligase family. LigA subfamily. Requires Mg(2+) as cofactor. The cofactor is Mn(2+).

It catalyses the reaction NAD(+) + (deoxyribonucleotide)n-3'-hydroxyl + 5'-phospho-(deoxyribonucleotide)m = (deoxyribonucleotide)n+m + AMP + beta-nicotinamide D-nucleotide.. DNA ligase that catalyzes the formation of phosphodiester linkages between 5'-phosphoryl and 3'-hydroxyl groups in double-stranded DNA using NAD as a coenzyme and as the energy source for the reaction. It is essential for DNA replication and repair of damaged DNA. This is DNA ligase from Salmonella paratyphi A (strain ATCC 9150 / SARB42).